The chain runs to 309 residues: Ribosomal RNA small subunit methyltransferase H (309 aa).

S-adenosyl-L-methionine contacts are provided by residues 34–36, aspartate 54, phenylalanine 80, aspartate 102, and glutamine 109; that span reads GGH.

This sequence belongs to the methyltransferase superfamily. RsmH family.

The protein resides in the cytoplasm. It carries out the reaction cytidine(1402) in 16S rRNA + S-adenosyl-L-methionine = N(4)-methylcytidine(1402) in 16S rRNA + S-adenosyl-L-homocysteine + H(+). Functionally, specifically methylates the N4 position of cytidine in position 1402 (C1402) of 16S rRNA. This is Ribosomal RNA small subunit methyltransferase H from Cellvibrio japonicus (strain Ueda107) (Pseudomonas fluorescens subsp. cellulosa).